The chain runs to 113 residues: U11-theraphotoxin-Hhn1q (113 aa).

Residues 1 to 21 (MNTVRVTFLLVFVLAVSLGQA) form the signal peptide. The propeptide occupies 22–74 (DKDENRMEMQEKTEQGKSYLDFAENLLLQKLEELEAKLLEEDSEESRNSRQKR). Residues 61 to 82 (EEDSEESRNSRQKRCIGEGVPC) are disordered. 3 cysteine pairs are disulfide-bonded: cysteine 75–cysteine 90, cysteine 82–cysteine 95, and cysteine 89–cysteine 110.

The protein belongs to the neurotoxin 14 (magi-1) family. 01 (HNTX-16) subfamily. In terms of tissue distribution, expressed by the venom gland.

It is found in the secreted. Functionally, probable ion channel inhibitor. In Cyriopagopus hainanus (Chinese bird spider), this protein is U11-theraphotoxin-Hhn1q.